Consider the following 465-residue polypeptide: Glutamate--tRNA ligase (465 aa).

A 'HIGH' region motif is present at residues 11–21 (PSPTGYLHIGG). The short motif at 243 to 247 (KLSKR) is the 'KMSKS' region element. K246 is a binding site for ATP.

It belongs to the class-I aminoacyl-tRNA synthetase family. Glutamate--tRNA ligase type 1 subfamily. As to quaternary structure, monomer.

The protein resides in the cytoplasm. The enzyme catalyses tRNA(Glu) + L-glutamate + ATP = L-glutamyl-tRNA(Glu) + AMP + diphosphate. Its function is as follows. Catalyzes the attachment of glutamate to tRNA(Glu) in a two-step reaction: glutamate is first activated by ATP to form Glu-AMP and then transferred to the acceptor end of tRNA(Glu). The polypeptide is Glutamate--tRNA ligase (Aromatoleum aromaticum (strain DSM 19018 / LMG 30748 / EbN1) (Azoarcus sp. (strain EbN1))).